A 128-amino-acid chain; its full sequence is Large ribosomal subunit protein bL20c (128 aa).

The protein belongs to the bacterial ribosomal protein bL20 family.

It is found in the plastid. In terms of biological role, binds directly to 23S ribosomal RNA and is necessary for the in vitro assembly process of the 50S ribosomal subunit. It is not involved in the protein synthesizing functions of that subunit. This chain is Large ribosomal subunit protein bL20c (rpl20), found in Epifagus virginiana (Beechdrops).